The primary structure comprises 311 residues: Metal-staphylopine import system permease protein CntB (311 aa).

The next 6 helical transmembrane spans lie at 9–29 (IALM…LTYI), 105–125 (LTII…VVSA), 139–159 (VAFF…IIYV), 173–193 (GPES…GIYF), 237–257 (IFCM…YIFA), and 274–294 (FPVI…FNTL). One can recognise an ABC transmembrane type-1 domain in the interval 99 to 295 (FMNTLKLTII…VLFIVFNTLA (197 aa)).

This sequence belongs to the binding-protein-dependent transport system permease family. As to quaternary structure, the complex is composed of two ATP-binding proteins (CntD and CntF), two transmembrane proteins (CntB and CntC) and a solute-binding protein (CntA).

The protein localises to the cell membrane. In terms of biological role, part of the ABC transporter complex CntABCDF (Opp1) involved in the uptake of metal in complex with the metallophore staphylopine (StP). May be involved in the import of a large array of divalent metals ions such as nickel, cobalt, zinc, copper and iron. Probably responsible for the translocation of the substrate across the membrane. In Staphylococcus aureus (strain Mu50 / ATCC 700699), this protein is Metal-staphylopine import system permease protein CntB.